A 142-amino-acid polypeptide reads, in one-letter code: 3-hydroxyacyl-[acyl-carrier-protein] dehydratase FabZ (142 aa).

Residue histidine 48 is part of the active site.

This sequence belongs to the thioester dehydratase family. FabZ subfamily.

The protein localises to the cytoplasm. The enzyme catalyses a (3R)-hydroxyacyl-[ACP] = a (2E)-enoyl-[ACP] + H2O. Involved in unsaturated fatty acids biosynthesis. Catalyzes the dehydration of short chain beta-hydroxyacyl-ACPs and long chain saturated and unsaturated beta-hydroxyacyl-ACPs. The chain is 3-hydroxyacyl-[acyl-carrier-protein] dehydratase FabZ from Clostridioides difficile (strain 630) (Peptoclostridium difficile).